The chain runs to 1160 residues: Nonribosomal peptide synthetase fmqC (1160 aa).

The segment at 132–520 is adenylation; that stretch reads TYRELNDRSS…LGEVEHALQQ (389 aa). The Carrier domain occupies 642–719; sequence QPVTQLEESL…EMAGMLDGVT (78 aa). Ser679 is subject to O-(pantetheine 4'-phosphoryl)serine. Residues 749–1025 are condensation; the sequence is CTLEDLQEGF…CAAAETPMRI (277 aa).

The protein belongs to the NRP synthetase family. As to quaternary structure, interacts with the mitogen-activated protein kinase mpkA. Phosphorylated by mpkA during conidiogenesis.

Its subcellular location is the cytoplasm. Its pathway is alkaloid biosynthesis. Functionally, nonribosomal peptide synthetase; part of the gene cluster that mediates the biosynthesis of the antitumor fumiquinazolines that confer a dual-usage capability to defend against phagocytes in the environment and animal hosts. The simplest member is fumiquinazoline F (FQF) with a 6-6-6 tricyclic core derived from anthranilic acid (Ant), tryptophan (Trp), and alanine (Ala). The trimodular NRPS fmqA is responsible for FQF formation. Modules 1, 2 and 3 of fmqA are predicted to activate and load Ant, Trp and Ala, respectively, providing for the assembly of an Ant-Trp-Ala-S-enzyme intermediate that would undergo double cyclization for chain release and generation of the tricyclic 6-6-6 product fumiquinazoline F. The presence of an E domain predicted for module 2 of fmqA is consistent with epimerization of L-Trp to D-Trp during assembly to generate the R-stereocenter at C14 of FQF. The FAD-dependent monooxygenase fmqB and the monomodular NRPS fmqC then maturate FQF to FQA. FmqB oxidizes the 2',3'-double bond of the indole side chain of FQF, and fmqC activates L-Ala as the adenylate, installs it as the pantetheinyl thioester on its carrier protein domain, and acylates the oxidized indole for subsequent intramolecular cyclization to create the 6-5-5-imidazolindolone of FQA. The FAD-linked oxidoreductase fmqD introduces a third layer of scaffold complexity by converting FQA to the spirohemiaminal FQC, presumably by catalyzing the formation of a transient imine within the pyrazinone ring. FQC subsequently converts nonenzymatically to the known cyclic aminal FQD. This Aspergillus fumigatus (strain ATCC MYA-4609 / CBS 101355 / FGSC A1100 / Af293) (Neosartorya fumigata) protein is Nonribosomal peptide synthetase fmqC.